Reading from the N-terminus, the 417-residue chain is Probable serine incorporator (417 aa).

10 helical membrane passes run 25–45, 69–89, 104–124, 131–151, 180–200, 208–228, 239–259, 276–296, 339–359, and 391–411; these read VYVV…YWTF, VVYR…LVMI, GYWP…FFIP, YTWI…VLLI, CVLS…MLVF, INQF…VLSI, SGLF…YSAI, KEST…YSAF, FFHF…TNWA, and VVSS…PILL.

Belongs to the TDE1 family.

The protein resides in the endoplasmic reticulum membrane. Its function is as follows. Enhances the incorporation of serine into phosphatidylserine and sphingolipids. In Dictyostelium discoideum (Social amoeba), this protein is Probable serine incorporator (serinc).